We begin with the raw amino-acid sequence, 131 residues long: Small ribosomal subunit protein uS12c (131 aa).

This sequence belongs to the universal ribosomal protein uS12 family. As to quaternary structure, part of the 30S ribosomal subunit.

It is found in the plastid. Its subcellular location is the chloroplast. In terms of biological role, with S4 and S5 plays an important role in translational accuracy. Located at the interface of the 30S and 50S subunits. This is Small ribosomal subunit protein uS12c (rps12) from Stigeoclonium helveticum (Green alga).